The sequence spans 528 residues: tRNA-2-methylthio-N(6)-dimethylallyladenosine synthase (528 aa).

In terms of domain architecture, MTTase N-terminal spans Arg19 to His134. Residues Cys28, Cys63, Cys97, Cys171, Cys175, and Cys178 each coordinate [4Fe-4S] cluster. Positions Arg157 to Glu387 constitute a Radical SAM core domain. In terms of domain architecture, TRAM spans Gln390–Asp460.

This sequence belongs to the methylthiotransferase family. MiaB subfamily. Monomer. The cofactor is [4Fe-4S] cluster.

Its subcellular location is the cytoplasm. The enzyme catalyses N(6)-dimethylallyladenosine(37) in tRNA + (sulfur carrier)-SH + AH2 + 2 S-adenosyl-L-methionine = 2-methylsulfanyl-N(6)-dimethylallyladenosine(37) in tRNA + (sulfur carrier)-H + 5'-deoxyadenosine + L-methionine + A + S-adenosyl-L-homocysteine + 2 H(+). Functionally, catalyzes the methylthiolation of N6-(dimethylallyl)adenosine (i(6)A), leading to the formation of 2-methylthio-N6-(dimethylallyl)adenosine (ms(2)i(6)A) at position 37 in tRNAs that read codons beginning with uridine. The protein is tRNA-2-methylthio-N(6)-dimethylallyladenosine synthase of Clavibacter michiganensis subsp. michiganensis (strain NCPPB 382).